Consider the following 163-residue polypeptide: 3-isopropylmalate dehydratase small subunit (163 aa).

It belongs to the LeuD family. LeuD type 2 subfamily. As to quaternary structure, heterodimer of LeuC and LeuD.

It catalyses the reaction (2R,3S)-3-isopropylmalate = (2S)-2-isopropylmalate. It functions in the pathway amino-acid biosynthesis; L-leucine biosynthesis; L-leucine from 3-methyl-2-oxobutanoate: step 2/4. Functionally, catalyzes the isomerization between 2-isopropylmalate and 3-isopropylmalate, via the formation of 2-isopropylmaleate. In Pyrococcus horikoshii (strain ATCC 700860 / DSM 12428 / JCM 9974 / NBRC 100139 / OT-3), this protein is 3-isopropylmalate dehydratase small subunit (leuD).